Reading from the N-terminus, the 239-residue chain is Heptaprenylglyceryl phosphate synthase (239 aa).

Lys12 is a sn-glycerol 1-phosphate binding site. Mg(2+) is bound by residues Asp14 and Thr40. Sn-glycerol 1-phosphate-binding positions include 159–164 (YLEYSG), Gly189, and 209–210 (GN).

This sequence belongs to the GGGP/HepGP synthase family. Group I subfamily. As to quaternary structure, homodimer. The cofactor is Mg(2+).

The catalysed reaction is sn-glycerol 1-phosphate + all-trans-heptaprenyl diphosphate = 3-heptaprenyl-sn-glycero-1-phosphate + diphosphate. Its pathway is membrane lipid metabolism; glycerophospholipid metabolism. Prenyltransferase that catalyzes in vivo the transfer of the heptaprenyl moiety of heptaprenyl pyrophosphate (HepPP; 35 carbon atoms) to the C3 hydroxyl of sn-glycerol-1-phosphate (G1P), producing heptaprenylglyceryl phosphate (HepGP). This reaction is an ether-bond-formation step in the biosynthesis of archaea-type G1P-based membrane lipids found in Bacillales. This chain is Heptaprenylglyceryl phosphate synthase, found in Geobacillus thermodenitrificans (strain NG80-2).